Reading from the N-terminus, the 508-residue chain is Light-independent protochlorophyllide reductase subunit B (508 aa).

Aspartate 36 serves as a coordination point for [4Fe-4S] cluster. The active-site Proton donor is aspartate 294. A substrate-binding site is contributed by glycine 429–methionine 430.

The protein belongs to the ChlB/BchB/BchZ family. As to quaternary structure, protochlorophyllide reductase is composed of three subunits; ChlL, ChlN and ChlB. Forms a heterotetramer of two ChlB and two ChlN subunits. It depends on [4Fe-4S] cluster as a cofactor.

It carries out the reaction chlorophyllide a + oxidized 2[4Fe-4S]-[ferredoxin] + 2 ADP + 2 phosphate = protochlorophyllide a + reduced 2[4Fe-4S]-[ferredoxin] + 2 ATP + 2 H2O. Its pathway is porphyrin-containing compound metabolism; chlorophyll biosynthesis (light-independent). Component of the dark-operative protochlorophyllide reductase (DPOR) that uses Mg-ATP and reduced ferredoxin to reduce ring D of protochlorophyllide (Pchlide) to form chlorophyllide a (Chlide). This reaction is light-independent. The NB-protein (ChlN-ChlB) is the catalytic component of the complex. The chain is Light-independent protochlorophyllide reductase subunit B from Gloeothece citriformis (strain PCC 7424) (Cyanothece sp. (strain PCC 7424)).